The following is a 333-amino-acid chain: D-fructose 1,6-bisphosphatase class 2/sedoheptulose 1,7-bisphosphatase (333 aa).

The Mn(2+) site is built by D33, E57, D85, and E88. Residues 88–90, Y119, 164–166, and 186–188 each bind substrate; these read EGT, RAR, and DGD. E213 lines the Mn(2+) pocket.

This sequence belongs to the FBPase class 2 family. As to quaternary structure, homotetramer. Mn(2+) serves as cofactor.

The catalysed reaction is beta-D-fructose 1,6-bisphosphate + H2O = beta-D-fructose 6-phosphate + phosphate. The enzyme catalyses D-sedoheptulose 1,7-bisphosphate + H2O = D-sedoheptulose 7-phosphate + phosphate. It participates in carbohydrate biosynthesis; Calvin cycle. Functionally, catalyzes the hydrolysis of fructose 1,6-bisphosphate (Fru 1,6-P2) and sedoheptulose 1,7-bisphosphate (Sed 1,7-P2) to fructose 6-phosphate and sedoheptulose 7-phosphate, respectively. The chain is D-fructose 1,6-bisphosphatase class 2/sedoheptulose 1,7-bisphosphatase from Prochlorococcus marinus (strain MIT 9515).